The primary structure comprises 63 residues: Large ribosomal subunit protein uL29 (63 aa).

This sequence belongs to the universal ribosomal protein uL29 family.

The chain is Large ribosomal subunit protein uL29 from Pseudomonas aeruginosa (strain UCBPP-PA14).